The following is a 170-amino-acid chain: S-ribosylhomocysteine lyase (170 aa).

The Fe cation site is built by His-54, His-58, and Cys-128.

This sequence belongs to the LuxS family. Homodimer. The cofactor is Fe cation.

It catalyses the reaction S-(5-deoxy-D-ribos-5-yl)-L-homocysteine = (S)-4,5-dihydroxypentane-2,3-dione + L-homocysteine. Its function is as follows. Involved in the synthesis of autoinducer 2 (AI-2) which is secreted by bacteria and is used to communicate both the cell density and the metabolic potential of the environment. The regulation of gene expression in response to changes in cell density is called quorum sensing. Catalyzes the transformation of S-ribosylhomocysteine (RHC) to homocysteine (HC) and 4,5-dihydroxy-2,3-pentadione (DPD). The chain is S-ribosylhomocysteine lyase from Marinomonas sp. (strain MWYL1).